Here is a 107-residue protein sequence, read N- to C-terminus: UPF0145 protein PC1_1703 (107 aa).

Belongs to the UPF0145 family.

The polypeptide is UPF0145 protein PC1_1703 (Pectobacterium carotovorum subsp. carotovorum (strain PC1)).